Here is a 3898-residue protein sequence, read N- to C-terminus: Genome polyprotein (3898 aa).

The Peptidase C53 domain maps to Met1–Cys168. Disordered regions lie at residues Leu47 to Gly72, Lys172 to Asp209, and Lys223 to Glu245. Catalysis depends on for N-terminal protease activity residues His49 and Cys69. The segment covering Lys172–Pro207 has biased composition (basic and acidic residues). Residues Asn272, Asn281, Asn296, and Asn335 are each glycosylated (N-linked (GlcNAc...) asparagine; by host). Disulfide bonds link Cys308–Cys352 and Cys338–Cys339. Active-site for E(rns) glycoprotein RNase activity residues include His344, Glu345, Lys348, and His349. Residues Asn365 and Asn370 are each glycosylated (N-linked (GlcNAc...) asparagine; by host). Intrachain disulfides connect Cys380–Cys425 and Cys384–Cys408. N-linked (GlcNAc...) asparagine; by host glycosylation is found at Asn413, Asn487, and Asn597. The Lumenal portion of the chain corresponds to Ala498 to Leu666. The helical transmembrane segment at Val667–Ile687 threads the bilayer. At Thr688–Ser1035 the chain is on the lumenal side. 2 disulfides stabilise this stretch: Cys696–Cys740 and Cys751–Cys798. 4 N-linked (GlcNAc...) asparagine; by host glycosylation sites follow: Asn809, Asn878, Asn922, and Asn990. Helical transmembrane passes span Ile1036 to Tyr1056, Asn1079 to Leu1099, Val1108 to Leu1128, Leu1144 to Ala1164, Pro1189 to Thr1209, Trp1217 to Leu1237, Ile1247 to Thr1267, and Val1281 to Leu1301. An N-linked (GlcNAc...) asparagine; by host glycan is attached at Asn1357. Residues Met1360–Ile1380 traverse the membrane as a helical segment. N-linked (GlcNAc...) asparagine; by host glycosylation occurs at Asn1419. A Peptidase C74 domain is found at Arg1441–Arg1589. Residue His1447 is the For cysteine protease NS2 activity of the active site. N-linked (GlcNAc...) asparagine; by host glycosylation is present at Asn1451. Catalysis depends on for cysteine protease NS2 activity residues Glu1461 and Cys1512. Residues Met1568–Leu1588 traverse the membrane as a helical segment. One can recognise a Peptidase S31 domain in the interval Gly1590–Arg1763. Residues His1658 and Asp1695 each act as charge relay system; for serine protease NS3 activity in the active site. The N-linked (GlcNAc...) asparagine; by host glycan is linked to Asn1713. The active-site Charge relay system; for serine protease NS3 activity is Ser1752. The Helicase ATP-binding domain maps to Ile1802–Ala1960. Residue Leu1815 to Thr1822 coordinates ATP. The DEAH box motif lies at Asp1910–His1913. The Helicase C-terminal domain occupies Gly1978–Asn2143. Asn2134, Asn2217, Asn2494, Asn2682, Asn2751, Asn2891, and Asn2988 each carry an N-linked (GlcNAc...) asparagine; by host glycan. 2 residues coordinate GTP: Thr3499 and Leu3501. The 124-residue stretch at Pro3518 to Phe3641 folds into the RdRp catalytic domain. Asn3688 is a glycosylation site (N-linked (GlcNAc...) asparagine; by host). Residues Arg3696 and Lys3704 each contribute to the GTP site. Residues Asn3777 and Asn3793 are each glycosylated (N-linked (GlcNAc...) asparagine; by host).

Belongs to the pestivirus polyprotein family. As to quaternary structure, homodimer; disulfide-linked. Homodimer; disulfide-linked. Heterodimer with E1; disulfide-linked. In terms of assembly, interacts with host IFIH1/MDA5; this interaction is involved in the inhibition of IFN-beta production. Post-translationally, heavily glycosylated. In terms of processing, the viral RNA of pestiviruses is expressed as a single polyprotein which undergoes post-translational proteolytic processing resulting in the production of at least eleven individual proteins. The N-terminal protease cleaves itself from the nascent polyprotein autocatalytically and thereby generates the N-terminus of the adjacent viral capsid protein C. Cleavage between E2 and p7 is partial.

It localises to the virion. Its subcellular location is the host membrane. The protein localises to the virion membrane. The protein resides in the host endoplasmic reticulum membrane. It is found in the host cytoplasm. The enzyme catalyses Leu is conserved at position P1 for all four cleavage sites. Alanine is found at position P1' of the NS4A-NS4B cleavage site, whereas serine is found at position P1' of the NS3-NS4A, NS4B-NS5A and NS5A-NS5B cleavage sites.. The catalysed reaction is RNA(n) + a ribonucleoside 5'-triphosphate = RNA(n+1) + diphosphate. It catalyses the reaction a ribonucleoside 5'-triphosphate + H2O = a ribonucleoside 5'-diphosphate + phosphate + H(+). It carries out the reaction ATP + H2O = ADP + phosphate + H(+). The enzyme catalyses a ribonucleotidyl-ribonucleotide-RNA + H2O = a 3'-end 3'-phospho-ribonucleotide-RNA + a 5'-end dephospho-ribonucleoside-RNA + H(+). The catalysed reaction is a ribonucleotidyl-ribonucleotide-RNA = a 3'-end 2',3'-cyclophospho-ribonucleotide-RNA + a 5'-end dephospho-ribonucleoside-RNA. It catalyses the reaction a 3'-end 2',3'-cyclophospho-ribonucleotide-RNA + H2O = a 3'-end 3'-phospho-ribonucleotide-RNA + H(+). Inhibited by Zn(2+), which binds the catalytic site. Functionally, leader cysteine autoprotease that cleaves itself from the nascent polyprotein during translation of the viral mRNA. Once released, plays a role in the inhibition of host innate immune response by interacting with host IRF3 and inducing its proteasomal degradation. Packages viral RNA to form a viral nucleocapsid and thereby protects viral RNA. Also plays a role in transcription regulation. Protects the incoming virus against IFN-induced effectors. Its function is as follows. Initial binding to target cell probably involves interaction of E(rns) with glycosaminoglycans. Also possesses intrinsic ribonuclease (RNase) activity that can inhibit the production of type I interferon and assist in the development of persistent infections. In terms of biological role, E1 and/or E2 are probably responsible of cell attachment with CD46 and subsequent fusion after internalization of the virion by endocytosis. Functionally, E1 and/or E2 are probably responsible of cell attachment with CD46 and subsequent fusion after internalization of the virion by endocytosis. Probably functions as a coeffector of fusion providing structural integrity to the fusion complex and possibly controlling exposure of the fusion motif in E1. Plays an essential role in the virus replication cycle by acting as a viroporin. Forms ion conductive pores, which alters the cell permeability allowing the transport of ions and other small molecules. Forms a leader sequence to properly orient NS2 in the membrane. Its function is as follows. Uncleaved NS2-3 is required for production of infectious virus. In terms of biological role, plays a role in the regulation of viral RNA replication. Functionally, multifunctional protein that contains an N-terminal protease and a C-terminal helicase, playing essential roles in viral polyprotein processing and viral genome replication. The chymotrypsin-like serine protease activity utilizes NS4A as an essential cofactor and catalyzes the cleavage of the polyprotein leading to the release of NS4A, NS4B, NS5A, and NS5B. Interacts with NS5B to enhance RNA-dependent RNA polymerase activity. Acts as a cofactor for the NS3 protease activity. Its function is as follows. Induces a specific membrane alteration that serves as a scaffold for the virus replication complex. Plays a role in the inhibition of host innate immune response by inhibiting RIGI/IFIH1-mediated IFN-beta production. In terms of biological role, replicates the viral (+) and (-) genome. Initiates the primer-independent RNA replication via a de novo mechanism requiring GTP. This chain is Genome polyprotein, found in Bos taurus (Bovine).